A 243-amino-acid chain; its full sequence is 1-(5-phosphoribosyl)-5-[(5-phosphoribosylamino)methylideneamino] imidazole-4-carboxamide isomerase (243 aa).

The active-site Proton acceptor is the D9. D131 acts as the Proton donor in catalysis.

It belongs to the HisA/HisF family.

It localises to the cytoplasm. The catalysed reaction is 1-(5-phospho-beta-D-ribosyl)-5-[(5-phospho-beta-D-ribosylamino)methylideneamino]imidazole-4-carboxamide = 5-[(5-phospho-1-deoxy-D-ribulos-1-ylimino)methylamino]-1-(5-phospho-beta-D-ribosyl)imidazole-4-carboxamide. The protein operates within amino-acid biosynthesis; L-histidine biosynthesis; L-histidine from 5-phospho-alpha-D-ribose 1-diphosphate: step 4/9. The sequence is that of 1-(5-phosphoribosyl)-5-[(5-phosphoribosylamino)methylideneamino] imidazole-4-carboxamide isomerase from Campylobacter jejuni (strain RM1221).